A 425-amino-acid chain; its full sequence is Dihydroorotase (425 aa).

Residues His56 and His58 each contribute to the Zn(2+) site. Substrate is bound by residues 58–60 (HWR) and Asn90. Zn(2+)-binding residues include Asp147, His174, and His227. Asn273 provides a ligand contact to substrate. Asp300 provides a ligand contact to Zn(2+). Asp300 is a catalytic residue. Substrate contacts are provided by residues His304 and 318–319 (FG).

It belongs to the metallo-dependent hydrolases superfamily. DHOase family. Class I DHOase subfamily. It depends on Zn(2+) as a cofactor.

The catalysed reaction is (S)-dihydroorotate + H2O = N-carbamoyl-L-aspartate + H(+). It participates in pyrimidine metabolism; UMP biosynthesis via de novo pathway; (S)-dihydroorotate from bicarbonate: step 3/3. Its function is as follows. Catalyzes the reversible cyclization of carbamoyl aspartate to dihydroorotate. The chain is Dihydroorotase from Fusobacterium nucleatum subsp. nucleatum (strain ATCC 25586 / DSM 15643 / BCRC 10681 / CIP 101130 / JCM 8532 / KCTC 2640 / LMG 13131 / VPI 4355).